The sequence spans 188 residues: Protein CRIPTO3 (188 aa).

Residues 78 to 107 (LNRTCCLNGGTCMLESFCACPPSFYGRNCE) form the EGF-like domain. Asn79 carries N-linked (GlcNAc...) asparagine glycosylation. Cystine bridges form between Cys82/Cys89, Cys83/Cys95, Cys97/Cys106, Cys115/Cys133, Cys128/Cys149, and Cys131/Cys140.

The protein belongs to the EGF-CFC (Cripto-1/FRL1/Cryptic) family. Expressed weakly in lung, colon and breast. Expressed also strongly in primary cancer tissues; lung and colon cancers.

Its subcellular location is the cell membrane. In terms of biological role, could play a role in the determination of the epiblastic cells that subsequently give rise to the mesoderm. Activates the Nodal-dependent signaling pathway. This chain is Protein CRIPTO3, found in Homo sapiens (Human).